A 197-amino-acid polypeptide reads, in one-letter code: Putative eggshell protein (197 aa).

The first 17 residues, 1–17 (MKFHLVLLLAIVPLTLA), serve as a signal peptide directing secretion.

This chain is Putative eggshell protein, found in Fasciola hepatica (Liver fluke).